The primary structure comprises 122 residues: NADH-quinone oxidoreductase subunit A (122 aa).

The next 3 helical transmembrane spans lie at leucine 10–glycine 30, phenylalanine 67–valine 87, and leucine 91–isoleucine 111.

Belongs to the complex I subunit 3 family. NDH-1 is composed of 14 different subunits. Subunits NuoA, H, J, K, L, M, N constitute the membrane sector of the complex.

It is found in the cell membrane. The enzyme catalyses a quinone + NADH + 5 H(+)(in) = a quinol + NAD(+) + 4 H(+)(out). NDH-1 shuttles electrons from NADH, via FMN and iron-sulfur (Fe-S) centers, to quinones in the respiratory chain. The immediate electron acceptor for the enzyme in this species is believed to be a menaquinone. Couples the redox reaction to proton translocation (for every two electrons transferred, four hydrogen ions are translocated across the cytoplasmic membrane), and thus conserves the redox energy in a proton gradient. The polypeptide is NADH-quinone oxidoreductase subunit A (Geobacillus kaustophilus (strain HTA426)).